The sequence spans 779 residues: Ribonucleoside-diphosphate reductase large subunit (779 aa).

Residues S178, 193-194, G222, 420-424, and 614-618 each bind substrate; these read SC, NLCIE, and PTATS. The cysteines at positions 194 and 440 are disulfide-linked. N420 functions as the Proton acceptor in the catalytic mechanism. C422 (cysteine radical intermediate) is an active-site residue. Catalysis depends on E424, which acts as the Proton acceptor.

This sequence belongs to the ribonucleoside diphosphate reductase large chain family. As to quaternary structure, heterotetramer composed of a homodimer of the large subunit (R1) and a homodimer of the small subunit (R2). Larger multisubunit protein complex are also active, composed of (R1)n(R2)n.

It carries out the reaction a 2'-deoxyribonucleoside 5'-diphosphate + [thioredoxin]-disulfide + H2O = a ribonucleoside 5'-diphosphate + [thioredoxin]-dithiol. Its activity is regulated as follows. Under complex allosteric control mediated by deoxynucleoside triphosphates and ATP binding. The type of nucleotide bound at the specificity site determines substrate preference. It seems probable that ATP makes the enzyme reduce CDP and UDP, dGTP favors ADP reduction and dTTP favors GDP reduction. Ribonucleoside-diphosphate reductase holoenzyme provides the precursors necessary for viral DNA synthesis. Allows virus growth in non-dividing cells. Catalyzes the biosynthesis of deoxyribonucleotides from the corresponding ribonucleotides. This Ornithodoros (relapsing fever ticks) protein is Ribonucleoside-diphosphate reductase large subunit.